Here is a 337-residue protein sequence, read N- to C-terminus: Heme A synthase (337 aa).

The next 5 membrane-spanning stretches (helical) occupy residues 6 to 26 (ITKW…IGGI), 87 to 107 (FIHR…LIYF), 119 to 139 (LPYI…WYMV), 154 to 174 (LAFH…QLIK), and 192 to 212 (LIFS…GALV). His-256 contributes to the heme binding site. 3 helical membrane-spanning segments follow: residues 258–278 (LVGY…LKIE), 285–305 (IAYF…LTLL), and 308–328 (VPII…SIII). A heme-binding site is contributed by His-316.

This sequence belongs to the COX15/CtaA family. Type 2 subfamily. Interacts with CtaB. Heme b serves as cofactor.

Its subcellular location is the cell membrane. It carries out the reaction Fe(II)-heme o + 2 A + H2O = Fe(II)-heme a + 2 AH2. Its pathway is porphyrin-containing compound metabolism; heme A biosynthesis; heme A from heme O: step 1/1. Catalyzes the conversion of heme O to heme A by two successive hydroxylations of the methyl group at C8. The first hydroxylation forms heme I, the second hydroxylation results in an unstable dihydroxymethyl group, which spontaneously dehydrates, resulting in the formyl group of heme A. This Rickettsia conorii (strain ATCC VR-613 / Malish 7) protein is Heme A synthase.